Consider the following 347-residue polypeptide: uncharacterized protein (347 aa).

Disordered regions lie at residues 1–40, 72–92, 133–158, 173–209, and 306–347; these read MAQE…SNSM, SCED…IQGS, SDST…QLTL, ENQK…QVSH, and EDPR…PPDF. The segment covering 15 to 25 has biased composition (polar residues); it reads PGQNITETTTD. A compositionally biased stretch (basic and acidic residues) spans 143 to 154; it reads GDNKDKHPKEKT. Residues 179-194 are compositionally biased toward acidic residues; that stretch reads KDDDSVFPESAQEEDS. Over residues 195 to 209 the composition is skewed to polar residues; it reads QLPSSSLPGMAQVSH. Residues 306–318 show a composition bias toward basic and acidic residues; it reads EDPREANERPREL. A compositionally biased stretch (basic residues) spans 319 to 330; the sequence is ARKKRFSYRSKR.

This is an uncharacterized protein from Bos taurus (Bovine).